The primary structure comprises 146 residues: NADH-quinone oxidoreductase subunit A (146 aa).

3 helical membrane passes run 14 to 34, 68 to 88, and 96 to 116; these read FGLF…GGFL, LVAM…AWAV, and IGFI…IYLV.

It belongs to the complex I subunit 3 family. In terms of assembly, NDH-1 is composed of 13 different subunits. Subunits NuoA, H, J, K, L, M, N constitute the membrane sector of the complex.

It is found in the cell inner membrane. It catalyses the reaction a quinone + NADH + 5 H(+)(in) = a quinol + NAD(+) + 4 H(+)(out). NDH-1 shuttles electrons from NADH, via FMN and iron-sulfur (Fe-S) centers, to quinones in the respiratory chain. The immediate electron acceptor for the enzyme in this species is believed to be ubiquinone. Couples the redox reaction to proton translocation (for every two electrons transferred, four hydrogen ions are translocated across the cytoplasmic membrane), and thus conserves the redox energy in a proton gradient. In Pectobacterium carotovorum subsp. carotovorum (Erwinia carotovora subsp. carotovora), this protein is NADH-quinone oxidoreductase subunit A.